A 150-amino-acid chain; its full sequence is 3-hydroxyacyl-[acyl-carrier-protein] dehydratase FabZ (150 aa).

Residue histidine 51 is part of the active site.

This sequence belongs to the thioester dehydratase family. FabZ subfamily.

The protein localises to the cytoplasm. The catalysed reaction is a (3R)-hydroxyacyl-[ACP] = a (2E)-enoyl-[ACP] + H2O. Its function is as follows. Involved in unsaturated fatty acids biosynthesis. Catalyzes the dehydration of short chain beta-hydroxyacyl-ACPs and long chain saturated and unsaturated beta-hydroxyacyl-ACPs. The sequence is that of 3-hydroxyacyl-[acyl-carrier-protein] dehydratase FabZ from Legionella pneumophila (strain Lens).